Here is a 231-residue protein sequence, read N- to C-terminus: tRNA (guanine-N(1)-)-methyltransferase (231 aa).

Residues Gly-112 and 132–137 each bind S-adenosyl-L-methionine; that span reads LGDFVL.

Belongs to the RNA methyltransferase TrmD family. In terms of assembly, homodimer.

The protein resides in the cytoplasm. The catalysed reaction is guanosine(37) in tRNA + S-adenosyl-L-methionine = N(1)-methylguanosine(37) in tRNA + S-adenosyl-L-homocysteine + H(+). Its function is as follows. Specifically methylates guanosine-37 in various tRNAs. In Microcystis aeruginosa (strain NIES-843 / IAM M-2473), this protein is tRNA (guanine-N(1)-)-methyltransferase.